Here is a 124-residue protein sequence, read N- to C-terminus: Small ribosomal subunit protein uS12 (124 aa).

Position 89 is a 3-methylthioaspartic acid (aspartate 89). Residues 102–124 are disordered; the sequence is LDTSGVNNRKHGRSKYGTKRPKS. Positions 109-124 are enriched in basic residues; that stretch reads NRKHGRSKYGTKRPKS.

Belongs to the universal ribosomal protein uS12 family. As to quaternary structure, part of the 30S ribosomal subunit. Contacts proteins S8 and S17. May interact with IF1 in the 30S initiation complex.

Functionally, with S4 and S5 plays an important role in translational accuracy. Its function is as follows. Interacts with and stabilizes bases of the 16S rRNA that are involved in tRNA selection in the A site and with the mRNA backbone. Located at the interface of the 30S and 50S subunits, it traverses the body of the 30S subunit contacting proteins on the other side and probably holding the rRNA structure together. The combined cluster of proteins S8, S12 and S17 appears to hold together the shoulder and platform of the 30S subunit. This is Small ribosomal subunit protein uS12 from Francisella tularensis subsp. novicida (strain U112).